The primary structure comprises 137 residues: Large ribosomal subunit protein uL16 (137 aa).

It belongs to the universal ribosomal protein uL16 family. Part of the 50S ribosomal subunit.

Its function is as follows. Binds 23S rRNA and is also seen to make contacts with the A and possibly P site tRNAs. This Stenotrophomonas maltophilia (strain R551-3) protein is Large ribosomal subunit protein uL16.